Consider the following 174-residue polypeptide: Matrix protein (174 aa).

In terms of assembly, homomultimer. Interacts with nucleoprotein and with the cytoplasmic domain of glycoprotein.

The protein localises to the virion membrane. It localises to the host endomembrane system. Functionally, plays a major role in assembly and budding of virion. Completely covers the ribonucleoprotein coil and keep it in condensed bullet-shaped form. Inhibits viral transcription and stimulates replication. In Hordeum vulgare (Barley), this protein is Matrix protein (M).